The sequence spans 219 residues: Probable transaldolase (219 aa).

Lys-83 (schiff-base intermediate with substrate) is an active-site residue.

The protein belongs to the transaldolase family. Type 3B subfamily.

It is found in the cytoplasm. The enzyme catalyses D-sedoheptulose 7-phosphate + D-glyceraldehyde 3-phosphate = D-erythrose 4-phosphate + beta-D-fructose 6-phosphate. It participates in carbohydrate degradation; pentose phosphate pathway; D-glyceraldehyde 3-phosphate and beta-D-fructose 6-phosphate from D-ribose 5-phosphate and D-xylulose 5-phosphate (non-oxidative stage): step 2/3. Functionally, transaldolase is important for the balance of metabolites in the pentose-phosphate pathway. This is Probable transaldolase from Cereibacter sphaeroides (strain ATCC 17029 / ATH 2.4.9) (Rhodobacter sphaeroides).